Consider the following 429-residue polypeptide: Citrate synthase, chromosomal (429 aa).

Residues H306 and D364 contribute to the active site.

This sequence belongs to the citrate synthase family.

The enzyme catalyses oxaloacetate + acetyl-CoA + H2O = citrate + CoA + H(+). The protein operates within carbohydrate metabolism; tricarboxylic acid cycle; isocitrate from oxaloacetate: step 1/2. This is Citrate synthase, chromosomal (ccsA) from Rhizobium tropici.